We begin with the raw amino-acid sequence, 198 residues long: Probable GTP-binding protein EngB (198 aa).

Residues 21–195 enclose the EngB-type G domain; that stretch reads NFSEVAFLGR…EDIIINQTLG (175 aa). Residues 29-36, 56-60, 81-84, 151-154, and 174-176 contribute to the GTP site; these read GRSNVGKS, GKTQL, DLPG, TKCD, and VSN. 2 residues coordinate Mg(2+): S36 and T58.

The protein belongs to the TRAFAC class TrmE-Era-EngA-EngB-Septin-like GTPase superfamily. EngB GTPase family. The cofactor is Mg(2+).

Its function is as follows. Necessary for normal cell division and for the maintenance of normal septation. This is Probable GTP-binding protein EngB from Campylobacter jejuni subsp. jejuni serotype O:2 (strain ATCC 700819 / NCTC 11168).